We begin with the raw amino-acid sequence, 327 residues long: Gonadotropin-releasing hormone receptor (327 aa).

Topologically, residues 1 to 38 (MANNASLEQDPNHCSAINNSIPLIQGKLPTLTVSGKIR) are extracellular. Residues Asn4 and Asn18 are each glycosylated (N-linked (GlcNAc...) asparagine). The chain crosses the membrane as a helical span at residues 39–58 (VTVTFFLFLLSTAFNASFLL). The Cytoplasmic portion of the chain corresponds to 59–77 (KLQKWTQKRKKGKKLSRMK). A helical membrane pass occupies residues 78–97 (VLLKHLTLANLLETLIVMPL). Topologically, residues 98-115 (DGMWNITVQWYAGEFLCK) are extracellular. Residue Asn102 is glycosylated (N-linked (GlcNAc...) asparagine). Cys114 and Cys195 are disulfide-bonded. A helical membrane pass occupies residues 116-137 (VLSYLKLFSMYAPAFMMVVISL). Residues 138–164 (DRSLAITQPLAVQSNSKLEQSMISLAW) lie on the Cytoplasmic side of the membrane. The helical transmembrane segment at 165 to 184 (ILSIVFAGPQLYIFRMIYLA) threads the bilayer. The Extracellular portion of the chain corresponds to 185–211 (DGSGPTVFSQCVTHCSFPQWWHQAFYN). A helical transmembrane segment spans residues 212-231 (FFTFGCLFIIPLLIMLICNA). The Cytoplasmic portion of the chain corresponds to 232–280 (KIIFALTRVLHQDPRKLQLNQSKNNIPRARLRTLKMTVAFATSFVVCWT). Residues 281–299 (PYYVLGIWYWFDPEMLNRV) form a helical membrane-spanning segment. Residues 300 to 305 (SEPVNH) are Extracellular-facing. Residues 306-325 (FFFLFAFLNPCFDPLIYGYF) form a helical membrane-spanning segment. Residues 326–327 (SL) lie on the Cytoplasmic side of the membrane.

Belongs to the G-protein coupled receptor 1 family. As to expression, pituitary gland.

The protein resides in the cell membrane. Its function is as follows. Receptor for gonadotropin releasing hormone (GnRH) that mediates the action of GnRH to stimulate the secretion of the gonadotropic hormones luteinizing hormone (LH) and follicle-stimulating hormone (FSH). This receptor mediates its action by association with G-proteins that activate a phosphatidylinositol-calcium second messenger system. This is Gonadotropin-releasing hormone receptor (Gnrhr) from Mus musculus (Mouse).